Consider the following 172-residue polypeptide: Putative phosphoesterase BC_1225 (172 aa).

The active-site Proton donor is the histidine 34. 2 short sequence motifs (HXTX) span residues 34-37 and 115-118; these read HITL and HLTI. Catalysis depends on histidine 115, which acts as the Proton acceptor.

This sequence belongs to the 2H phosphoesterase superfamily. YjcG family.

In Bacillus cereus (strain ATCC 14579 / DSM 31 / CCUG 7414 / JCM 2152 / NBRC 15305 / NCIMB 9373 / NCTC 2599 / NRRL B-3711), this protein is Putative phosphoesterase BC_1225.